A 91-amino-acid polypeptide reads, in one-letter code: Sec-independent protein translocase protein TatA (91 aa).

The chain crosses the membrane as a helical span at residues 1–21 (MGSMSVWHWVIVAVVVMLLFG). The disordered stretch occupies residues 42-91 (GMADDETQPTNTTSVPPVGPNDPVRTLPHQGAPGTAPQQTHVPAGDHKAV).

It belongs to the TatA/E family. As to quaternary structure, the Tat system comprises two distinct complexes: a TatABC complex, containing multiple copies of TatA, TatB and TatC subunits, and a separate TatA complex, containing only TatA subunits. Substrates initially bind to the TatABC complex, which probably triggers association of the separate TatA complex to form the active translocon.

It localises to the cell inner membrane. Its function is as follows. Part of the twin-arginine translocation (Tat) system that transports large folded proteins containing a characteristic twin-arginine motif in their signal peptide across membranes. TatA could form the protein-conducting channel of the Tat system. The protein is Sec-independent protein translocase protein TatA of Methylorubrum populi (strain ATCC BAA-705 / NCIMB 13946 / BJ001) (Methylobacterium populi).